The chain runs to 344 residues: Follistatin (344 aa).

A signal peptide spans 1-29 (MVRARHQPGGLCLLLLLLCQFMEDRSAQA). Residues 30 to 103 (GNCWLRQAKN…TCENVDCGPG (74 aa)) form the TB domain. 18 disulfide bridges follow: C32-C55, C42-C88, C56-C91, C95-C106, C100-C116, C118-C150, C122-C143, C132-C164, C168-C179, C173-C189, C192-C225, C196-C218, C207-C239, C245-C256, C250-C267, C270-C302, C274-C295, and C284-C316. In terms of domain architecture, Follistatin-like 1 spans 94-117 (TCENVDCGPGKKCRMNKKNKPRCV). The region spanning 112 to 166 (NKPRCVCAPDCSNITWKGPVCGLDGKTYRNECALLKARCKEQPELEVQYQGRCKK) is the Kazal-like 1 domain. Residue N124 is glycosylated (N-linked (GlcNAc...) asparagine). Residues 167–190 (TCRDVFCPGSSTCVVDQTNNAYCV) enclose the Follistatin-like 2 domain. One can recognise a Kazal-like 2 domain in the interval 186–241 (NAYCVTCNRICPEPASSEQYLCGNDGVTYSSACHLRKATCLLGRSIGLAYEGKCIK). Residues 244–268 (SCEDIQCTGGKKCLWDFKVGRGRCS) enclose the Follistatin-like 3 domain. A Kazal-like 3 domain is found at 264 to 318 (RGRCSLCDELCPDSKSDEPVCASDNATYASECAMKEAACSSGVLLEVKHSGSCNS). N288 is a glycosylation site (N-linked (GlcNAc...) asparagine). Residues 314–344 (GSCNSISEDTEEEEEDEDQDYSFPISSILEW) are disordered. Residues 321-333 (EDTEEEEEDEDQD) are compositionally biased toward acidic residues.

As to quaternary structure, interacts with GDF11. Interacts with activin A/INHBA. Interacts with MYOSTATIN/MSTN. Isoform 1 is the predominant isoform in serum but is undetectable in follicular fluid. In the embryo, strong expression is seen in the palatal epithelia, including the medial edge epithelial and midline epithelial seam of the palatal shelves. Less pronounced expression is also seen throughout the palatal shelf and tongue mesenchyme.

It localises to the secreted. It is found in the nucleus. The protein localises to the nucleolus. Functionally, multifunctional regulatory protein whose primary function is to antagonize members of the transforming growth factor beta (TGF-beta) superfamily including activin, myostatin, GDF11 or bone morphogenetic proteins (BMPs). Mechanistically, binds to these ligands in the extracellular space, blocking their type II receptor-binding site to inhibit downstream signaling. Plays an essential role in muscle fiber formation and growth both by preventing the repressive effects of myostatin and through SMAD3/AKT/mTOR signaling independently of myostatin. Also promotes neural differentiation by antagonizing the action BMP4. Acts as a specific inhibitor of the biosynthesis and secretion of pituitary follicle stimulating hormone (FSH) by sequestering activin A/INHBA. On the other hand, translocates into the nucleus where it down-regulates rRNA synthesis and ribosome biogenesis to maintain cellular energy homeostasis by binding to rDNA. The chain is Follistatin from Homo sapiens (Human).